The chain runs to 123 residues: Large ribosomal subunit protein bL12 (123 aa).

Belongs to the bacterial ribosomal protein bL12 family. As to quaternary structure, homodimer. Part of the ribosomal stalk of the 50S ribosomal subunit. Forms a multimeric L10(L12)X complex, where L10 forms an elongated spine to which 2 to 4 L12 dimers bind in a sequential fashion. Binds GTP-bound translation factors.

Functionally, forms part of the ribosomal stalk which helps the ribosome interact with GTP-bound translation factors. Is thus essential for accurate translation. This chain is Large ribosomal subunit protein bL12, found in Geobacillus kaustophilus (strain HTA426).